Reading from the N-terminus, the 428-residue chain is Immunoglobulin superfamily containing leucine-rich repeat protein (428 aa).

The signal sequence occupies residues 1-18; sequence MRALCLLCWAVLLNLVRA. Positions 19-50 constitute an LRRNT domain; it reads CPEPCDCGEKYGFQIADCAYRDLEGVPPGFPA. Asn-51 carries an N-linked (GlcNAc...) asparagine glycan. 5 LRR repeats span residues 51–72, 75–98, 99–122, 123–144, and 147–168; these read NVTT…AFRE, LLQS…APLS, HLKS…HNLS, ALQL…AFSS, and ALRS…TFAP. An LRRCT domain is found at 180 to 231; sequence NPFDCTCGIVWFKTWALASAVSIPEQDNIACTTPHVLKGIPLGRLPPLPCSA. In terms of domain architecture, Ig-like spans 232 to 343; sequence PSVQLSYQPS…GSAESSVNVA (112 aa). Cys-257 and Cys-327 are oxidised to a cystine. Residue Asn-309 is glycosylated (N-linked (GlcNAc...) asparagine).

As to expression, detected in thyroid, heart, retina and spinal cord.

It localises to the secreted. This chain is Immunoglobulin superfamily containing leucine-rich repeat protein (Islr), found in Mus musculus (Mouse).